Reading from the N-terminus, the 263-residue chain is Chymotrypsinogen B (263 aa).

The N-terminal stretch at 1–18 (MAFLWLVSCFALVGATFG) is a signal peptide. 5 disulfide bridges follow: C19/C140, C60/C76, C154/C219, C186/C200, and C209/C238. A Peptidase S1 domain is found at 34-261 (IVNGEDAIPG…LMPWVQEILE (228 aa)). The active-site Charge relay system is H75. S93 is subject to Phosphoserine. D120 acts as the Charge relay system in catalysis. Residue S213 is the Charge relay system of the active site.

The protein belongs to the peptidase S1 family.

It localises to the secreted. The protein resides in the extracellular space. It catalyses the reaction Preferential cleavage: Tyr-|-Xaa, Trp-|-Xaa, Phe-|-Xaa, Leu-|-Xaa.. This Mus musculus (Mouse) protein is Chymotrypsinogen B (Ctrb1).